A 324-amino-acid chain; its full sequence is Pseudouridylate synthase RPUSD4, mitochondrial (324 aa).

The transit peptide at 1-11 directs the protein to the mitochondrion; that stretch reads MAAAGGGATRG. Aspartate 105 is an active-site residue.

The protein belongs to the pseudouridine synthase RluA family.

The protein resides in the mitochondrion matrix. It localises to the nucleus. Its subcellular location is the cytoplasm. The catalysed reaction is uridine in 5S rRNA = pseudouridine in 5S rRNA. It catalyses the reaction a uridine in tRNA = a pseudouridine in tRNA. It carries out the reaction a uridine in mRNA = a pseudouridine in mRNA. Functionally, catalyzes uridine to pseudouridine isomerization (pseudouridylation) of different mitochondrial RNA substrates. Acts on position 1397 in 16S mitochondrial ribosomal RNA (16S mt-rRNA). This modification is required for the assembly of 16S mt-rRNA into a functional mitochondrial ribosome. Acts on position 39 in mitochondrial tRNA(Phe). Also catalyzes pseudouridylation of mRNAs in nucleus: acts as a regulator of pre-mRNA splicing by mediating pseudouridylation of pre-mRNAs at locations associated with alternatively spliced regions. Pseudouridylation of pre-mRNAs near splice sites directly regulates mRNA splicing and mRNA 3'-end processing. In Xenopus tropicalis (Western clawed frog), this protein is Pseudouridylate synthase RPUSD4, mitochondrial.